A 274-amino-acid polypeptide reads, in one-letter code: Dermonecrotic toxin SdSicTox-betaIIB1bxiii (274 aa).

Residue His-5 is part of the active site. The Mg(2+) site is built by Glu-25 and Asp-27. His-41 serves as the catalytic Nucleophile. Disulfide bonds link Cys-45–Cys-51 and Cys-47–Cys-190. Position 85 (Asp-85) interacts with Mg(2+).

Belongs to the arthropod phospholipase D family. Class II subfamily. Mg(2+) serves as cofactor. In terms of tissue distribution, expressed by the venom gland.

The protein localises to the secreted. The enzyme catalyses an N-(acyl)-sphingosylphosphocholine = an N-(acyl)-sphingosyl-1,3-cyclic phosphate + choline. It carries out the reaction an N-(acyl)-sphingosylphosphoethanolamine = an N-(acyl)-sphingosyl-1,3-cyclic phosphate + ethanolamine. It catalyses the reaction a 1-acyl-sn-glycero-3-phosphocholine = a 1-acyl-sn-glycero-2,3-cyclic phosphate + choline. The catalysed reaction is a 1-acyl-sn-glycero-3-phosphoethanolamine = a 1-acyl-sn-glycero-2,3-cyclic phosphate + ethanolamine. In terms of biological role, dermonecrotic toxins cleave the phosphodiester linkage between the phosphate and headgroup of certain phospholipids (sphingolipid and lysolipid substrates), forming an alcohol (often choline) and a cyclic phosphate. This toxin acts on sphingomyelin (SM). It may also act on ceramide phosphoethanolamine (CPE), lysophosphatidylcholine (LPC) and lysophosphatidylethanolamine (LPE), but not on lysophosphatidylserine (LPS), and lysophosphatidylglycerol (LPG). It acts by transphosphatidylation, releasing exclusively cyclic phosphate products as second products. Induces dermonecrosis, hemolysis, increased vascular permeability, edema, inflammatory response, and platelet aggregation. The chain is Dermonecrotic toxin SdSicTox-betaIIB1bxiii from Sicarius cf. damarensis (strain GJB-2008) (Six-eyed sand spider).